Reading from the N-terminus, the 132-residue chain is Putative RNase AF_0947 (132 aa).

Catalysis depends on residues Arg91 and His96. An RX(4)HXY motif motif is present at residues 91 to 98; that stretch reads RNAIAHHY. Tyr98 bears the O-di-AMP-tyrosine mark.

It belongs to the HepT RNase toxin family. Homodimer, probably forms a complex with cognate antitoxin AF_0948. In terms of processing, modified by cognate antitoxin AF_0948; probably at least 2 successive AMPylation events occur on Tyr-98.

In terms of biological role, probable toxic component of a putative type VII toxin-antitoxin (TA) system, probably an RNase. Probably neutralized by cognate antitoxin AF_0948. Neutralization may be due to AMPylation by AF_0948. This chain is Putative RNase AF_0947, found in Archaeoglobus fulgidus (strain ATCC 49558 / DSM 4304 / JCM 9628 / NBRC 100126 / VC-16).